An 879-amino-acid chain; its full sequence is Beta-mannosidase (879 aa).

Residues 1-17 (MLLRLLLLLAPCGAGFA) form the signal peptide. Asparagine 35 and asparagine 77 each carry an N-linked (GlcNAc...) asparagine glycan. An intrachain disulfide couples cysteine 167 to cysteine 176. Residue 190–192 (WDW) coordinates substrate. Residues asparagine 297 and asparagine 302 are each glycosylated (N-linked (GlcNAc...) asparagine). Residue asparagine 456 participates in substrate binding. The Proton donor role is filled by glutamate 457. Intrachain disulfides connect cysteine 540-cysteine 629, cysteine 732-cysteine 761, and cysteine 764-cysteine 769. Glutamate 554 (nucleophile) is an active-site residue. Asparagine 607 carries N-linked (GlcNAc...) asparagine glycosylation. Asparagine 803 carries an N-linked (GlcNAc...) asparagine glycan.

It belongs to the glycosyl hydrolase 2 family. In terms of assembly, monomer. In terms of processing, the N-terminus is blocked. Post-translationally, N-glycosylated. Detected in kidney (at protein level). Highest expression is found in thyroid tissue. The amount of transcript is significantly higher in normal tissues than in tissues affected by the disease.

It localises to the lysosome. The enzyme catalyses Hydrolysis of terminal, non-reducing beta-D-mannose residues in beta-D-mannosides.. The protein operates within glycan metabolism; N-glycan degradation. Functionally, exoglycosidase that cleaves the single beta-linked mannose residue from the non-reducing end of all N-linked glycoprotein oligosaccharides. The polypeptide is Beta-mannosidase (MANBA) (Bos taurus (Bovine)).